A 66-amino-acid chain; its full sequence is DNA-directed RNA polymerase subunit omega (66 aa).

Belongs to the RNA polymerase subunit omega family. As to quaternary structure, the RNAP catalytic core consists of 2 alpha, 1 beta, 1 beta' and 1 omega subunit. When a sigma factor is associated with the core the holoenzyme is formed, which can initiate transcription.

The enzyme catalyses RNA(n) + a ribonucleoside 5'-triphosphate = RNA(n+1) + diphosphate. Functionally, promotes RNA polymerase assembly. Latches the N- and C-terminal regions of the beta' subunit thereby facilitating its interaction with the beta and alpha subunits. This chain is DNA-directed RNA polymerase subunit omega, found in Clostridium botulinum (strain Eklund 17B / Type B).